The following is a 510-amino-acid chain: Amidophosphoribosyltransferase (510 aa).

The active-site Nucleophile is cysteine 2. One can recognise a Glutamine amidotransferase type-2 domain in the interval 2–239 (CGILGIVLAN…PGEAVIIPKN (238 aa)). The Mg(2+) site is built by aspartate 373 and aspartate 374.

The protein in the C-terminal section; belongs to the purine/pyrimidine phosphoribosyltransferase family. Requires Mg(2+) as cofactor.

The enzyme catalyses 5-phospho-beta-D-ribosylamine + L-glutamate + diphosphate = 5-phospho-alpha-D-ribose 1-diphosphate + L-glutamine + H2O. The protein operates within purine metabolism; IMP biosynthesis via de novo pathway; N(1)-(5-phospho-D-ribosyl)glycinamide from 5-phospho-alpha-D-ribose 1-diphosphate: step 1/2. This is Amidophosphoribosyltransferase (ADE4) from Saccharomyces cerevisiae (strain ATCC 204508 / S288c) (Baker's yeast).